We begin with the raw amino-acid sequence, 90 residues long: Large ribosomal subunit protein bL27 (90 aa).

A disordered region spans residues 1–20; it reads MAHKKAGGSSRNGRDSAGKR.

It belongs to the bacterial ribosomal protein bL27 family.

The chain is Large ribosomal subunit protein bL27 from Rhodopseudomonas palustris (strain ATCC BAA-98 / CGA009).